Reading from the N-terminus, the 426-residue chain is MKLQKPKGTQDILSVAAAKWQYVEGVARETFKQYHYGEIRTPMFEHYEVISRSVGDTTDIVTKEMYDFYDKGDRHITLRPEGTAPVVRSYVENKLFAPEVQKPVKLYYIGSMFRYERPQAGRLREFHQIGVECFGSANPATDVETIAMAYHLFERLGIKGVTLHLNSLGNAASRAAYRQALIDYLSPMRDTLSKDSQRRLDENPLRVLDSKEKEDKIAVANAPSILDYQDEESQAHFDAVRSMLEALAIPYVIDTNMVRGLDYYNHTIFEFITEVDQSELTICAGGRYDGLVEYFGGPATPGFGFGLGLERLLLILDKQGVELPVEEGLDVYIAVLGADANVAALALTQAIRRQGFTVERDYLGRKIKAQFKSADTFKAKVVITLGESEIKAGQAVLKHNQTRQEMTVSFDQIQTDFASIFAECVQ.

It belongs to the class-II aminoacyl-tRNA synthetase family. In terms of assembly, homodimer.

It localises to the cytoplasm. It catalyses the reaction tRNA(His) + L-histidine + ATP = L-histidyl-tRNA(His) + AMP + diphosphate + H(+). This Streptococcus dysgalactiae subsp. equisimilis (Streptococcus equisimilis) protein is Histidine--tRNA ligase (hisS).